The primary structure comprises 417 residues: D-galactonate dehydratase family member Dd703_0947 (417 aa).

A substrate-binding site is contributed by His-127. Catalysis depends on Tyr-158, which acts as the Proton donor/acceptor. Residue Asp-223 participates in Mg(2+) binding. His-225 serves as the catalytic Proton donor/acceptor. Mg(2+) is bound by residues Glu-249 and Glu-275. The substrate site is built by Glu-275, Arg-296, His-325, Asp-329, and Glu-352.

Belongs to the mandelate racemase/muconate lactonizing enzyme family. GalD subfamily. Mg(2+) is required as a cofactor.

The catalysed reaction is D-mannonate = 2-dehydro-3-deoxy-D-gluconate + H2O. The enzyme catalyses D-gluconate = 2-dehydro-3-deoxy-D-gluconate + H2O. Functionally, has low dehydratase activity with D-mannonate and D-gluconate, suggesting that these are not physiological substrates and that it has no significant role in the in vivo degradation of these compounds. Has no detectable activity with a panel of 70 other acid sugars (in vitro). The protein is D-galactonate dehydratase family member Dd703_0947 of Musicola paradisiaca (strain Ech703) (Dickeya paradisiaca).